Here is a 484-residue protein sequence, read N- to C-terminus: Adenylyltransferase and sulfurtransferase uba4 (484 aa).

The span at 39–49 (AKAQSAAATTA) shows a compositional bias: low complexity. Residues 39 to 58 (AKAQSAAATTAGDNHDKPRR) form a disordered region. ATP-binding positions include Gly98, Asp119, 126 to 130 (SNLHR), Lys143, and 187 to 188 (DN). 2 residues coordinate Zn(2+): Cys236 and Cys239. The Glycyl thioester intermediate; for adenylyltransferase activity role is filled by Cys253. Zn(2+)-binding residues include Cys313 and Cys316. Residues 370 to 482 (PEKTPTLIDV…WREQVDPEWP (113 aa)) form the Rhodanese domain. The Cysteine persulfide intermediate; for sulfurtransferase activity role is filled by Cys437.

This sequence in the N-terminal section; belongs to the HesA/MoeB/ThiF family. UBA4 subfamily. It depends on Zn(2+) as a cofactor.

It localises to the cytoplasm. The protein resides in the cytosol. It carries out the reaction [molybdopterin-synthase sulfur-carrier protein]-C-terminal Gly-Gly + ATP + H(+) = [molybdopterin-synthase sulfur-carrier protein]-C-terminal Gly-Gly-AMP + diphosphate. The enzyme catalyses [molybdopterin-synthase sulfur-carrier protein]-C-terminal Gly-Gly-AMP + S-sulfanyl-L-cysteinyl-[cysteine desulfurase] + AH2 = [molybdopterin-synthase sulfur-carrier protein]-C-terminal-Gly-aminoethanethioate + L-cysteinyl-[cysteine desulfurase] + A + AMP + 2 H(+). It functions in the pathway tRNA modification; 5-methoxycarbonylmethyl-2-thiouridine-tRNA biosynthesis. It participates in cofactor biosynthesis; molybdopterin biosynthesis. In terms of biological role, plays a central role in 2-thiolation of mcm(5)S(2)U at tRNA wobble positions of cytosolic tRNA(Lys), tRNA(Glu) and tRNA(Gln). Also essential during biosynthesis of the molybdenum cofactor. Acts by mediating the C-terminal thiocarboxylation of sulfur carriers urm1 and mocs2a. Its N-terminus first activates urm1 and mocs2a as acyl-adenylates (-COAMP), then the persulfide sulfur on the catalytic cysteine is transferred to urm1 and mocs2a to form thiocarboxylation (-COSH) of their C-terminus. The reaction probably involves hydrogen sulfide that is generated from the persulfide intermediate and that acts as a nucleophile towards urm1 and mocs2a. Subsequently, a transient disulfide bond is formed. Does not use thiosulfate as sulfur donor; nfs1 probably acting as a sulfur donor for thiocarboxylation reactions. This Aspergillus terreus (strain NIH 2624 / FGSC A1156) protein is Adenylyltransferase and sulfurtransferase uba4.